The following is a 267-amino-acid chain: NAD kinase (267 aa).

Asp52 (proton acceptor) is an active-site residue. NAD(+)-binding positions include Asp52 to Gly53, Arg57, Asn121 to Glu122, Arg132, Lys150, Asp152, Thr163 to Ser168, and Ala187.

This sequence belongs to the NAD kinase family. The cofactor is a divalent metal cation.

It localises to the cytoplasm. It carries out the reaction NAD(+) + ATP = ADP + NADP(+) + H(+). Functionally, involved in the regulation of the intracellular balance of NAD and NADP, and is a key enzyme in the biosynthesis of NADP. Catalyzes specifically the phosphorylation on 2'-hydroxyl of the adenosine moiety of NAD to yield NADP. The sequence is that of NAD kinase from Fusobacterium nucleatum subsp. nucleatum (strain ATCC 25586 / DSM 15643 / BCRC 10681 / CIP 101130 / JCM 8532 / KCTC 2640 / LMG 13131 / VPI 4355).